Consider the following 154-residue polypeptide: 6,7-dimethyl-8-ribityllumazine synthase (154 aa).

Residues Phe22, 56-58 (AFE), and 80-82 (AVI) contribute to the 5-amino-6-(D-ribitylamino)uracil site. (2S)-2-hydroxy-3-oxobutyl phosphate is bound at residue 85–86 (ET). His88 acts as the Proton donor in catalysis. Position 113 (Phe113) interacts with 5-amino-6-(D-ribitylamino)uracil. Arg127 is a binding site for (2S)-2-hydroxy-3-oxobutyl phosphate.

The protein belongs to the DMRL synthase family.

The enzyme catalyses (2S)-2-hydroxy-3-oxobutyl phosphate + 5-amino-6-(D-ribitylamino)uracil = 6,7-dimethyl-8-(1-D-ribityl)lumazine + phosphate + 2 H2O + H(+). Its pathway is cofactor biosynthesis; riboflavin biosynthesis; riboflavin from 2-hydroxy-3-oxobutyl phosphate and 5-amino-6-(D-ribitylamino)uracil: step 1/2. Functionally, catalyzes the formation of 6,7-dimethyl-8-ribityllumazine by condensation of 5-amino-6-(D-ribitylamino)uracil with 3,4-dihydroxy-2-butanone 4-phosphate. This is the penultimate step in the biosynthesis of riboflavin. This chain is 6,7-dimethyl-8-ribityllumazine synthase, found in Thermoanaerobacter pseudethanolicus (strain ATCC 33223 / 39E) (Clostridium thermohydrosulfuricum).